Here is a 502-residue protein sequence, read N- to C-terminus: Probable cobyric acid synthase (502 aa).

The 199-residue stretch at 250–448 (KITIGTLRLP…FHGIFHNFEF (199 aa)) folds into the GATase cobBQ-type domain. The active-site Nucleophile is the Cys330. His440 is a catalytic residue.

This sequence belongs to the CobB/CobQ family. CobQ subfamily.

It functions in the pathway cofactor biosynthesis; adenosylcobalamin biosynthesis. Catalyzes amidations at positions B, D, E, and G on adenosylcobyrinic A,C-diamide. NH(2) groups are provided by glutamine, and one molecule of ATP is hydrogenolyzed for each amidation. The protein is Probable cobyric acid synthase of Methanosphaera stadtmanae (strain ATCC 43021 / DSM 3091 / JCM 11832 / MCB-3).